Consider the following 760-residue polypeptide: Probable 3',5'-cyclic phosphodiesterase pde-6 (760 aa).

2 disordered regions span residues 1-47 and 410-429; these read MGDR…AATA and KRSV…ERRR. Positions 33-47 are enriched in low complexity; that stretch reads PAARRGAQRAPAATA. Over residues 412–429 the composition is skewed to basic and acidic residues; the sequence is SVVDAHREKRGSHGERRR. One can recognise a PDEase domain in the interval 426–750; it reads ERRRVSADVK…EKWKVMTSQW (325 aa). His502 (proton donor) is an active-site residue. A divalent metal cation contacts are provided by His506, His542, Asp543, and Asp656.

The protein belongs to the cyclic nucleotide phosphodiesterase family. It depends on a divalent metal cation as a cofactor.

It carries out the reaction a nucleoside 3',5'-cyclic phosphate + H2O = a nucleoside 5'-phosphate + H(+). This chain is Probable 3',5'-cyclic phosphodiesterase pde-6 (pde-6), found in Caenorhabditis elegans.